The sequence spans 159 residues: Phosphopantetheine adenylyltransferase (159 aa).

A substrate-binding site is contributed by Thr9. ATP is bound by residues 9 to 10 and His17; that span reads TF. Substrate contacts are provided by Lys41, Leu73, and Arg87. ATP contacts are provided by residues 88 to 90, Glu98, and 123 to 129; these read GLR and YMFISAT.

The protein belongs to the bacterial CoaD family. Homohexamer. The cofactor is Mg(2+).

It is found in the cytoplasm. The enzyme catalyses (R)-4'-phosphopantetheine + ATP + H(+) = 3'-dephospho-CoA + diphosphate. The protein operates within cofactor biosynthesis; coenzyme A biosynthesis; CoA from (R)-pantothenate: step 4/5. Reversibly transfers an adenylyl group from ATP to 4'-phosphopantetheine, yielding dephospho-CoA (dPCoA) and pyrophosphate. The polypeptide is Phosphopantetheine adenylyltransferase (Nitrosomonas europaea (strain ATCC 19718 / CIP 103999 / KCTC 2705 / NBRC 14298)).